The sequence spans 184 residues: Ras-related protein Rap-1b (184 aa).

10-18 (GSGGVGKSA) contacts GTP. The segment at 25-67 (QGIFVEKYDPTIEDSYRKQVEVDAQQCMLEILDTAGTEQFTAM) is interaction with KRIT1. The Effector region signature appears at 32–40 (YDPTIEDSY). GTP-binding positions include 57-61 (DTAGT), 116-119 (NKCD), and 147-149 (SAK). Position 179 is a phosphoserine; by PKA (Ser179). Cys181 is subject to Cysteine methyl ester. Cys181 is lipidated: S-geranylgeranyl cysteine. Residues 182 to 184 (QLL) constitute a propeptide, removed in mature form.

As to quaternary structure, heterodimer with RAP1GAP. Interacts with EPAC2. Interacts with SGSM1. Interacts with SGSM2. Interacts with SGSM3. Interacts with KRIT1. Interacts with RAP1GDS1.

Its subcellular location is the cell membrane. The protein resides in the cytoplasm. The protein localises to the cytosol. It is found in the cell junction. It catalyses the reaction GTP + H2O = GDP + phosphate + H(+). Its activity is regulated as follows. Activated by guanine nucleotide-exchange factor (GEF) EPAC2 in a cAMP-dependent manner. In terms of biological role, GTP-binding protein that possesses intrinsic GTPase activity. Contributes to the polarizing activity of KRIT1 and CDH5 in the establishment and maintenance of correct endothelial cell polarity and vascular lumen. Required for the localization of phosphorylated PRKCZ, PARD3 and TIAM1 to the cell junction. Plays a role in the establishment of basal endothelial barrier function. The sequence is that of Ras-related protein Rap-1b (RAP1B) from Bos taurus (Bovine).